The sequence spans 175 residues: Flagellar assembly factor FliW (175 aa).

This sequence belongs to the FliW family. In terms of assembly, interacts with translational regulator CsrA and flagellin(s).

It is found in the cytoplasm. Its function is as follows. Acts as an anti-CsrA protein, binds CsrA and prevents it from repressing translation of its target genes, one of which is flagellin. Binds to flagellin and participates in the assembly of the flagellum. This Bdellovibrio bacteriovorus (strain ATCC 15356 / DSM 50701 / NCIMB 9529 / HD100) protein is Flagellar assembly factor FliW.